The chain runs to 91 residues: Small ribosomal subunit protein uS19 (91 aa).

This sequence belongs to the universal ribosomal protein uS19 family.

Functionally, protein S19 forms a complex with S13 that binds strongly to the 16S ribosomal RNA. This is Small ribosomal subunit protein uS19 from Cupriavidus necator (strain ATCC 17699 / DSM 428 / KCTC 22496 / NCIMB 10442 / H16 / Stanier 337) (Ralstonia eutropha).